The sequence spans 763 residues: Phosphoglycerol transferase I (763 aa).

4 helical membrane passes run 1–21, 26–46, 77–97, and 108–128; these read MSEL…AWKA, WWFA…ITLF, ILPG…LGWI, and FGYS…SPAF.

It belongs to the OpgB family.

It localises to the cell inner membrane. It catalyses the reaction a phosphatidylglycerol + a membrane-derived-oligosaccharide D-glucose = a 1,2-diacyl-sn-glycerol + a membrane-derived-oligosaccharide 6-(glycerophospho)-D-glucose.. Its pathway is glycan metabolism; osmoregulated periplasmic glucan (OPG) biosynthesis. In terms of biological role, transfers a phosphoglycerol residue from phosphatidylglycerol to the membrane-bound nascent glucan backbones. This chain is Phosphoglycerol transferase I, found in Shigella boydii serotype 18 (strain CDC 3083-94 / BS512).